The chain runs to 396 residues: DNA replication and repair protein RecF (396 aa).

30-37 (GANGSGKT) contacts ATP.

The protein belongs to the RecF family.

The protein localises to the cytoplasm. Its function is as follows. The RecF protein is involved in DNA metabolism; it is required for DNA replication and normal SOS inducibility. RecF binds preferentially to single-stranded, linear DNA. It also seems to bind ATP. The polypeptide is DNA replication and repair protein RecF (Thermomicrobium roseum (strain ATCC 27502 / DSM 5159 / P-2)).